The chain runs to 22 residues: Brevinin-1OKc (22 aa).

Lysine amide is present on lysine 22.

As to expression, expressed by the skin glands.

It is found in the secreted. Functionally, antimicrobial peptide. Active against Gram-negative bacterium E.coli (MIC=6 uM) and against Gram-positive bacterium S.aureus (MIC=12.5 uM). This chain is Brevinin-1OKc, found in Nidirana okinavana (Kampira Falls frog).